Consider the following 1180-residue polypeptide: IQ domain-containing protein N (1180 aa).

Positions 34–78 (HPPAPAHPSLLDKMEKAPPQPQHEGLKSKEHLPQQPAEGKTASRR) are disordered. The IQ 1 domain occupies 103-132 (HARAATLIQANWRGYWLRQKLISQMMAAKA). 3 disordered regions span residues 283-324 (RVSA…ETPK), 476-496 (MSKT…PQTR), and 786-820 (QRLG…TQGG). IQ domains lie at 926-955 (RILA…GAMV), 956-978 (IQAT…ATTT), 979-1001 (IQSA…MLHP), 1113-1142 (QDKA…AAKI), and 1143-1165 (VQAT…LLGP).

As to quaternary structure, interacts with calmodulin.

In terms of biological role, essential for spermiogenesis and fertilization. May be required for manchette assembly in elongating spermatids. The protein is IQ domain-containing protein N of Homo sapiens (Human).